The primary structure comprises 243 residues: Venom nerve growth factor 2 (243 aa).

An N-terminal signal peptide occupies residues 1–18 (MSMLCYTLIIAFLIGIWA). Residues 19–125 (APKSEDNVPL…TLNRNIRAKR (107 aa)) constitute a propeptide that is removed on maturation. The span at 47–66 (GLKTSRNTDQRHPAPKKAED) shows a compositional bias: basic and acidic residues. The tract at residues 47-67 (GLKTSRNTDQRHPAPKKAEDQ) is disordered. Disulfide bonds link C139/C204 and C192/C234. An N-linked (GlcNAc...) asparagine glycan is attached at N148.

Belongs to the NGF-beta family. Homodimer; non-covalently linked. In terms of tissue distribution, expressed by the venom gland.

The protein resides in the secreted. Nerve growth factor is important for the development and maintenance of the sympathetic and sensory nervous systems. It stimulates division and differentiation of sympathetic and embryonic sensory neurons as well as basal forebrain cholinergic neurons in the brain. Its relevance in the snake venom is not clear. However, it has been shown to inhibit metalloproteinase-dependent proteolysis of platelet glycoprotein Ib alpha, suggesting a metalloproteinase inhibition to prevent metalloprotease autodigestion and/or protection against prey proteases. Binds a lipid between the two protein chains in the homodimer. The lipid-bound form promotes histamine relase from mouse mast cells, contrary to the lipid-free form. The chain is Venom nerve growth factor 2 from Pseudonaja textilis (Eastern brown snake).